Here is a 331-residue protein sequence, read N- to C-terminus: MNTLFAVTLVFVGCCSNVVFLELLVRDFPGCGNIVTFAQFAFIALEGFIFETNFGRKKPQIPLSNYVIMVTMFFTVSVINNYALDFNIAMPLHMIFRSGSLIANMILGIIILKNRYSMSKYLSIVLVSVGIFICTIMSAKQVNVEKGGTEEDGVYAFMHWLLGIAMLTFALLMSARMGIFQETLYKKYGKHSKEALFYNHCLPLPGFLLLSTNIYNHAVLFSQSPPMEVPVIGLSMPVMWFYLLMNVITQYVCIRGVFILTTECASLTVTLVVTLRKFLSLIISILYFQNPFTAWHWVGTAVVFLGTLLYTEVLSSIPAAFKGYKVDKKAE.

The next 10 helical transmembrane spans lie at 5-25 (FAVT…ELLV), 30-50 (GCGN…GFIF), 59-79 (PQIP…VSVI), 92-112 (LHMI…IIIL), 122-142 (LSIV…AKQV), 153-173 (GVYA…ALLM), 201-221 (CLPL…AVLF), 238-260 (VMWF…VFIL), 267-289 (LTVT…LYFQ), and 301-321 (AVVF…PAAF).

Belongs to the nucleotide-sugar transporter family. SLC35B subfamily.

The protein localises to the golgi apparatus membrane. Its function is as follows. Sugar transporter that specifically mediates the transport of UDP-xylose (UDP-Xyl) and UDP-N-acetylglucosamine (UDP-GlcNAc) from cytosol into Golgi. This chain is UDP-xylose and UDP-N-acetylglucosamine transporter (slc35b4), found in Danio rerio (Zebrafish).